Reading from the N-terminus, the 238-residue chain is Orotidine 5'-phosphate decarboxylase (238 aa).

Substrate contacts are provided by residues Asp18, Lys40, 67–76 (DMKLLDIDNT), Thr122, Arg183, Gln192, and Arg213. The active-site Proton donor is the Lys69.

It belongs to the OMP decarboxylase family. Type 1 subfamily. Homodimer.

The enzyme catalyses orotidine 5'-phosphate + H(+) = UMP + CO2. The protein operates within pyrimidine metabolism; UMP biosynthesis via de novo pathway; UMP from orotate: step 2/2. Catalyzes the decarboxylation of orotidine 5'-monophosphate (OMP) to uridine 5'-monophosphate (UMP). This chain is Orotidine 5'-phosphate decarboxylase, found in Brucella melitensis biotype 2 (strain ATCC 23457).